A 575-amino-acid polypeptide reads, in one-letter code: Sulfite reductase [NADPH] hemoprotein beta-component (575 aa).

Cysteine 438, cysteine 444, cysteine 484, and cysteine 488 together coordinate [4Fe-4S] cluster. Cysteine 488 contacts siroheme.

This sequence belongs to the nitrite and sulfite reductase 4Fe-4S domain family. Alpha(8)-beta(8). The alpha component is a flavoprotein, the beta component is a hemoprotein. Siroheme is required as a cofactor. It depends on [4Fe-4S] cluster as a cofactor.

It catalyses the reaction hydrogen sulfide + 3 NADP(+) + 3 H2O = sulfite + 3 NADPH + 4 H(+). The protein operates within sulfur metabolism; hydrogen sulfide biosynthesis; hydrogen sulfide from sulfite (NADPH route): step 1/1. Component of the sulfite reductase complex that catalyzes the 6-electron reduction of sulfite to sulfide. This is one of several activities required for the biosynthesis of L-cysteine from sulfate. The sequence is that of Sulfite reductase [NADPH] hemoprotein beta-component from Vibrio atlanticus (strain LGP32) (Vibrio splendidus (strain Mel32)).